The sequence spans 517 residues: Zinc finger protein 215 (517 aa).

An SCAN box domain is found at Arg-48–Val-126. One can recognise a KRAB domain in the interval Val-164 to Phe-237. C2H2-type zinc fingers lie at residues Tyr-379–His-401, Tyr-407–His-429, Tyr-462–His-484, and Phe-490–His-512.

Belongs to the krueppel C2H2-type zinc-finger protein family.

The protein resides in the nucleus. Its function is as follows. May be involved in transcriptional regulation. The polypeptide is Zinc finger protein 215 (ZNF215) (Pongo abelii (Sumatran orangutan)).